We begin with the raw amino-acid sequence, 286 residues long: Protoheme IX farnesyltransferase (286 aa).

8 consecutive transmembrane segments (helical) span residues 14-31 (FRLT…YILA), 38-58 (WLNL…ANII), 94-114 (LFLI…ALIL), 135-155 (IAVF…WIAV), 165-185 (VLFA…AWVL), 207-227 (TATI…LPYL), 228-248 (FGMS…LFFF), and 262-282 (ALLL…AFVL).

Belongs to the UbiA prenyltransferase family. Protoheme IX farnesyltransferase subfamily.

It localises to the cell inner membrane. It catalyses the reaction heme b + (2E,6E)-farnesyl diphosphate + H2O = Fe(II)-heme o + diphosphate. It participates in porphyrin-containing compound metabolism; heme O biosynthesis; heme O from protoheme: step 1/1. Functionally, converts heme B (protoheme IX) to heme O by substitution of the vinyl group on carbon 2 of heme B porphyrin ring with a hydroxyethyl farnesyl side group. In Cytophaga hutchinsonii (strain ATCC 33406 / DSM 1761 / CIP 103989 / NBRC 15051 / NCIMB 9469 / D465), this protein is Protoheme IX farnesyltransferase.